A 384-amino-acid polypeptide reads, in one-letter code: Aryl-alcohol dehydrogenase GME11368 (384 aa).

Residue Asp-69 coordinates NADP(+). Tyr-74 acts as the Proton donor in catalysis. NADP(+) contacts are provided by residues 177–178 (SD), Gln-203, and 301–309 (RKPEHLKAN).

It belongs to the aldo/keto reductase family. Aldo/keto reductase 2 subfamily.

Its pathway is secondary metabolite biosynthesis. Aryl-alcohol dehydrogenase; part of the gene cluster that mediates the biosynthesis of dibenzodioxocinones such as pestalotiollide B, a novel class of inhibitors against cholesterol ester transfer protein (CEPT). The biosynthesis initiates from condensation of acetate and malonate units catalyzed by the non-reducing PKS pks8/GME11356. Pks8/GME11356 lacks a thioesterase (TE) domain, which is important to the cyclizing of the third ring of atrochrysone carboxylic acid, and the esterase GME11355 might play the role of TE and catalyzes the cyclization reaction of the C ring. The lactamase-like protein GME11357 (or other beta-lactamases in Pestalotiopsis microspora) probably hydrolyzes the thioester bond between the ACP of pks8/GME11356 and the intermediate to release atrochrysone carboxylic acid, which is spontaneously dehydrates to form endocrocin anthrone. Endocrocin anthrone is further converted to emodin via the endocrocin intermediate. Emodin is then oxidized by several enzymes such as the Baeyer-Villiger oxidase GME11358, the oxidoreductase GME11367, the short chain dehydrogenase/reductase GME11373, as well as by other oxidoreductases from the cluster, to modify the A and C rings and open the B ring, and finally yield monodictyphenone. The prenyltransferase GME11375 may catalyze the addition reaction between the C5 side chains and the carbon bone of dibenzodioxocinones. The remaining biochemical reactions to the final product dibenzodioxocinones should be methylation catalyzed by methyltransferase GME11366 and reduction and lactonization reaction catalyzed by a series of oxidordeuctases. The polypeptide is Aryl-alcohol dehydrogenase GME11368 (Pestalotiopsis microspora).